A 220-amino-acid chain; its full sequence is Avenin-3 (220 aa).

The N-terminal stretch at 1–19 is a signal peptide; the sequence is MKTFLIFALLAMAATMATA. Pyrrolidone carboxylic acid is present on glutamine 20. 2 tandem repeats follow at residues 41 to 48 and 49 to 56. A 2 X 8 AA tandem repeats of Q-Q-M-L-L-Q-Q-Q region spans residues 41-56; that stretch reads QQMLLQQQQQMLLQQQ. 4 disulfide bridges follow: cysteine 69-cysteine 202, cysteine 77-cysteine 96, cysteine 103-cysteine 104, and cysteine 116-cysteine 210. A 2-1 repeat occupies 128–137; sequence MQQQQFFQPQ. Positions 128-146 are 2 X 10 AA tandem repeats of M-Q-Q-Q-Q-F-F-Q-P-Q; that stretch reads MQQQQFFQPQMQQQFFQPQ. The stretch at 138-146 is one 2-2; approximate repeat; it reads MQQQFFQPQ.

The protein belongs to the gliadin/glutenin family. In terms of assembly, monomer.

Its subcellular location is the vacuole. Seed storage protein. Serves as a source of nitrogen, carbon, and sulfur for the young developing seedling. The sequence is that of Avenin-3 from Avena sativa (Oat).